A 600-amino-acid chain; its full sequence is Beta-hexosaminidase (600 aa).

The N-terminal stretch at Met1 to Ala18 is a signal peptide. Residues Val19–Ser96 constitute a propeptide that is removed on maturation. Thr78 carries O-linked (Man...) threonine glycosylation. 2 O-linked (Man...) serine glycosylation sites follow: Ser83 and Ser84. Residues Asp222 and His275 each act as charge relay system in the active site. Residues Cys290 and Cys351 are joined by a disulfide bond. A glycan (N-linked (HexNAc...) asparagine) is linked at Asn318. Glu346 acts as the Charge relay system in catalysis. An N-linked (GlcNAc...) asparagine glycan is attached at Asn353. N-linked (HexNAc...) asparagine glycosylation is present at Asn387. A glycan (N-linked (GlcNAc...) asparagine) is linked at Asn428. An intrachain disulfide couples Cys448 to Cys483. N-linked (GlcNAc...) asparagine glycosylation is found at Asn500 and Asn525. An intrachain disulfide couples Cys583 to Cys590.

This sequence belongs to the glycosyl hydrolase 20 family. As to quaternary structure, homodimer. Oligosaccharide moieties may also take part in the dimerization. Dimerization is a pH-dependent reversible process. The individual catalytic cores dimerize and the catalytic core of one subunit in the active dimer interacts with the propeptide of the second subunit. The precursor of the propeptide is intracellularly processed in the endoplasmic reticulum by a dibasic peptidase, different from Kex2, removing Lys-97--Arg-101 from the precursor producing the activated propeptide. The propeptide binds non-covalently to the catalytic domain. Propeptide binding is necessary for full activation of the enzyme, dimerization of the catalytic domain and secretion of the active enzyme. In terms of processing, O-glycosylated. O-glycosylation (O-mannosylation) at the C-terminus of the propeptide is necessary for full enzyme activity. N-glycosylated. N-glycosylation of the catalytic domain increases the stability and solubility of the enzyme, especially at low pH. Contains high mannose-type (M4-M11) N-glycans at the C-terminus. N-glycan deglycosylation does not affect enzyme activity.

It localises to the secreted. The catalysed reaction is Hydrolysis of terminal non-reducing N-acetyl-D-hexosamine residues in N-acetyl-beta-D-hexosaminides.. Its activity is regulated as follows. Activated by non-covalent binding of the propeptide to the catalytic domain. The concentration of the propeptide is regulated in the endoplasmic reticulum and the propeptide thus regulates the amount of the active enzyme at various stages of the growth cycle. The dimeric enzyme has about half of the maximal activity in the presence of one bound propeptide, but is fully active with two bound O-glycosylated propeptides. Inhibited by N-acetylglucosamine (NAG)-thiazoline. Selectively hydrolyzes GlcNAcbeta(1-&gt;4)GlcNAc (N,N'-diacetylchitobiose) and Gal-NAcbeta(1-&gt;4)GlcNAc, but not their C-2 epimers GlcNAcbeta(1-&gt;4)ManNAc or Gal-NAcbeta(1-&gt;4)ManNAc. However, hydrolyzes both GlcNAcbeta(1-&gt;6)GlcNAc and GlcNAcbeta(1-&gt;6)ManNAc. Part of the binary chitinolytic system. Involved in hydrolysis of chitobiose and higher chito-oligomers (produced from cell wall chitin by endochitinases), thus contributing to the formation of germ tubes, fruit-bodies and septa during hyphenation. Hydrolyzes synthetic substrate p-nitrophenyl-beta-N-acetyl-D-glucosaminide (pNP-GlcNAc). Hydrolyzes synthetic substrate p-nitrophenyl-beta-N-acetyl-D-galactosaminide (pNP-GalNAc). Hydrolyzes chromogenic substrate 4-nitrophenyl-2-acetamido-2-deoxyglucopyranoside. This is Beta-hexosaminidase from Aspergillus oryzae (Yellow koji mold).